The sequence spans 230 residues: 3-beta-hydroxysteroid-Delta(8),Delta(7)-isomerase (230 aa).

Thr2 is modified (N-acetylthreonine). 4 helical membrane passes run 29–49, 66–86, 121–141, and 185–205; these read WHIL…TWLL, LCWF…FSFY, MESV…IAFL, and FWFY…ILVF. In terms of domain architecture, EXPERA spans 61-204; sequence GRRLALCWFA…IWLVIPGILV (144 aa).

Belongs to the EBP family. Expressed in liver.

It localises to the endoplasmic reticulum membrane. Its subcellular location is the nucleus envelope. The protein resides in the cytoplasmic vesicle. It catalyses the reaction lathosterol = 5alpha-cholest-8-en-3beta-ol. The enzyme catalyses zymosterol = 5alpha-cholesta-7,24-dien-3beta-ol. The catalysed reaction is 5,6alpha-epoxy-5alpha-cholestan-3beta-ol + H2O = 5alpha-cholestane-3beta,5,6beta-triol. It carries out the reaction 5,6beta-epoxy-5beta-cholestan-3beta-ol + H2O = 5alpha-cholestane-3beta,5,6beta-triol. Its pathway is steroid biosynthesis; cholesterol biosynthesis. With respect to regulation, enzymatic activity is induced by 25-hydroxycholesterol, cholestyramine and lovastatin. In terms of biological role, isomerase that catalyzes the conversion of Delta(8)-sterols to their corresponding Delta(7)-isomers. Its function is as follows. Component of the microsomal antiestrogen binding site (AEBS), a multiproteic complex at the ER membrane that consists of an association between EBP and 7-dehydrocholesterol reductase/DHCR7. This complex is responsible for cholesterol-5,6-epoxide hydrolase (ChEH) activity, which consists in the hydration of cholesterol-5,6-epoxides (5,6-EC) into cholestane-3beta,5alpha,6beta-triol (CT). The precise role of each component of this complex has not been described yet. This Rattus norvegicus (Rat) protein is 3-beta-hydroxysteroid-Delta(8),Delta(7)-isomerase.